Here is a 387-residue protein sequence, read N- to C-terminus: Galactokinase (387 aa).

33–36 (EHID) is a substrate binding site. ATP is bound by residues S67 and 124–130 (GAGLSSS). Mg(2+) contacts are provided by S130 and E162. The active-site Proton acceptor is D174. Residue Y224 coordinates substrate.

It belongs to the GHMP kinase family. GalK subfamily.

It localises to the cytoplasm. The catalysed reaction is alpha-D-galactose + ATP = alpha-D-galactose 1-phosphate + ADP + H(+). It functions in the pathway carbohydrate metabolism; galactose metabolism. Its function is as follows. Catalyzes the transfer of the gamma-phosphate of ATP to D-galactose to form alpha-D-galactose-1-phosphate (Gal-1-P). In Clostridium perfringens (strain SM101 / Type A), this protein is Galactokinase.